We begin with the raw amino-acid sequence, 257 residues long: General L-amino acid transport ATP-binding protein AapP (257 aa).

Positions 18-252 (VEIVNMNKWY…PQHERTKLFL (235 aa)) constitute an ABC transporter domain. 50 to 57 (GPSGSGKS) contacts ATP.

It belongs to the ABC transporter superfamily.

Part of a binding-protein-dependent transport system for L-amino acids, affects the uptake as well as the efflux of these amino acids. Probably responsible for energy coupling to the transport system. In Rhizobium johnstonii (strain DSM 114642 / LMG 32736 / 3841) (Rhizobium leguminosarum bv. viciae), this protein is General L-amino acid transport ATP-binding protein AapP (aapP).